A 121-amino-acid polypeptide reads, in one-letter code: Small ribosomal subunit protein bS6 (121 aa).

This sequence belongs to the bacterial ribosomal protein bS6 family.

Binds together with bS18 to 16S ribosomal RNA. This chain is Small ribosomal subunit protein bS6, found in Rickettsia conorii (strain ATCC VR-613 / Malish 7).